Consider the following 328-residue polypeptide: Ketol-acid reductoisomerase (NADP(+)) (328 aa).

The 181-residue stretch at 2 to 182 (AKIYRDGDAS…GATRAGVIET (181 aa)) folds into the KARI N-terminal Rossmann domain. Residues 25 to 28 (YGIQ), Arg-48, Ser-53, and 83 to 86 (DMEQ) each bind NADP(+). His-108 is an active-site residue. Gly-134 serves as a coordination point for NADP(+). A KARI C-terminal knotted domain is found at 183-328 (TFAEETETDL…AEMRKLLFGP (146 aa)). Residues Asp-191, Glu-195, Glu-227, and Glu-231 each coordinate Mg(2+). Residue Ser-252 participates in substrate binding.

This sequence belongs to the ketol-acid reductoisomerase family. The cofactor is Mg(2+).

The catalysed reaction is (2R)-2,3-dihydroxy-3-methylbutanoate + NADP(+) = (2S)-2-acetolactate + NADPH + H(+). It carries out the reaction (2R,3R)-2,3-dihydroxy-3-methylpentanoate + NADP(+) = (S)-2-ethyl-2-hydroxy-3-oxobutanoate + NADPH + H(+). It participates in amino-acid biosynthesis; L-isoleucine biosynthesis; L-isoleucine from 2-oxobutanoate: step 2/4. Its pathway is amino-acid biosynthesis; L-valine biosynthesis; L-valine from pyruvate: step 2/4. Involved in the biosynthesis of branched-chain amino acids (BCAA). Catalyzes an alkyl-migration followed by a ketol-acid reduction of (S)-2-acetolactate (S2AL) to yield (R)-2,3-dihydroxy-isovalerate. In the isomerase reaction, S2AL is rearranged via a Mg-dependent methyl migration to produce 3-hydroxy-3-methyl-2-ketobutyrate (HMKB). In the reductase reaction, this 2-ketoacid undergoes a metal-dependent reduction by NADPH to yield (R)-2,3-dihydroxy-isovalerate. This is Ketol-acid reductoisomerase (NADP(+)) from Pyrobaculum calidifontis (strain DSM 21063 / JCM 11548 / VA1).